The following is a 98-amino-acid chain: NADH-ubiquinone oxidoreductase chain 4L (98 aa).

A run of 3 helical transmembrane segments spans residues 1–21 (MSLVHINIFLAFTVSLVGLLM), 25–45 (HLMSSLLCLEGMMLSLFVMAT), and 59–81 (MPIILLVFAACERALGLSLLVMV).

The protein belongs to the complex I subunit 4L family. Core subunit of respiratory chain NADH dehydrogenase (Complex I) which is composed of 45 different subunits.

Its subcellular location is the mitochondrion inner membrane. The catalysed reaction is a ubiquinone + NADH + 5 H(+)(in) = a ubiquinol + NAD(+) + 4 H(+)(out). In terms of biological role, core subunit of the mitochondrial membrane respiratory chain NADH dehydrogenase (Complex I) which catalyzes electron transfer from NADH through the respiratory chain, using ubiquinone as an electron acceptor. Part of the enzyme membrane arm which is embedded in the lipid bilayer and involved in proton translocation. This Equus caballus (Horse) protein is NADH-ubiquinone oxidoreductase chain 4L (MT-ND4L).